The sequence spans 549 residues: Probable protein kinase UbiB (549 aa).

The 379-residue stretch at 123-501 (DFDDTPLASA…QQKAHKSNYL (379 aa)) folds into the Protein kinase domain. ATP contacts are provided by residues 129–137 (LASASISQV) and Lys-152. Catalysis depends on Asp-287, which acts as the Proton acceptor. 2 helical membrane passes run 498–518 (SNYLLITSAILVICGTILLNQ) and 520–540 (ATLWPSYGSIGIGITLWVLGW).

It belongs to the ABC1 family. UbiB subfamily.

Its subcellular location is the cell inner membrane. Its pathway is cofactor biosynthesis; ubiquinone biosynthesis [regulation]. Is probably a protein kinase regulator of UbiI activity which is involved in aerobic coenzyme Q (ubiquinone) biosynthesis. The sequence is that of Probable protein kinase UbiB from Shewanella pealeana (strain ATCC 700345 / ANG-SQ1).